The chain runs to 452 residues: Bifunctional F420 biosynthesis protein FbiB (452 aa).

The segment at 1–248 (MVSAPGDHAG…AGEEDLFWLG (248 aa)) is coenzyme F420:L-glutamate ligase. Residues 24–27 (LPEF), Ser-54, and Lys-59 each bind GTP. Position 113 (Asp-113) interacts with a divalent metal cation. Residue Asn-116 participates in GTP binding. Positions 154 and 155 each coordinate a divalent metal cation. The tract at residues 249–452 (TAEAVERGRR…RDPGDGLVER (204 aa)) is dehydro-coenzyme F420-0 reductase. FMN contacts are provided by residues 264–268 (RRSVR) and Ala-292. Asp-324 provides a ligand contact to coenzyme F420-(gamma-Glu)n. Gly-403 and Arg-440 together coordinate FMN.

In the N-terminal section; belongs to the CofE family. Mg(2+) is required as a cofactor. Mn(2+) serves as cofactor. The cofactor is K(+).

The enzyme catalyses oxidized coenzyme F420-0 + GTP + L-glutamate = oxidized coenzyme F420-1 + GDP + phosphate + H(+). The catalysed reaction is oxidized coenzyme F420-0 + FMN + H(+) = dehydro coenzyme F420-0 + FMNH2. It carries out the reaction oxidized coenzyme F420-1 + GTP + L-glutamate = oxidized coenzyme F420-2 + GDP + phosphate + H(+). It participates in cofactor biosynthesis; coenzyme F420 biosynthesis. Its function is as follows. Bifunctional enzyme that catalyzes the GTP-dependent successive addition of two or more gamma-linked L-glutamates to the L-lactyl phosphodiester of 7,8-didemethyl-8-hydroxy-5-deazariboflavin (F420-0) to form polyglutamated F420 derivatives, and the FMNH2-dependent reduction of dehydro-F420-0 to form F420-0. This chain is Bifunctional F420 biosynthesis protein FbiB, found in Nocardia farcinica (strain IFM 10152).